The following is an 866-amino-acid chain: Thiamine diphosphate dependent-3-acetyloctanal synthase PigD (866 aa).

The interval 826-866 (KGWQRDPSDREALQERKDWAARQPESTSTSFDQGQNKEAIS) is disordered. The segment covering 828–845 (WQRDPSDREALQERKDWA) has biased composition (basic and acidic residues). Residues 849-866 (PESTSTSFDQGQNKEAIS) are compositionally biased toward polar residues.

It belongs to the TPP enzyme family. It depends on thiamine diphosphate as a cofactor.

It carries out the reaction (2E)-octenal + pyruvate + H(+) = (S)-3-acetyloctanal + CO2. It functions in the pathway antibiotic biosynthesis; prodigiosin biosynthesis. Its function is as follows. Involved in the biosynthesis of 2-methyl-3-n-amyl-pyrrole (MAP), one of the terminal products involved in the biosynthesis of the red antibiotic prodigiosin (Pig). Catalyzes the decarboxylation of pyruvate, followed by the modification of the resulting two-carbon fragment acetaldehyde at the C3 position of the 2-octenal (1,2-addition of acetaldehyde) giving 3-acetyloctanal. The sequence is that of Thiamine diphosphate dependent-3-acetyloctanal synthase PigD from Serratia sp. (strain ATCC 39006) (Prodigiosinella confusarubida).